We begin with the raw amino-acid sequence, 252 residues long: Probable transcriptional regulatory protein Tmel_0985 (252 aa).

This sequence belongs to the TACO1 family.

It localises to the cytoplasm. In Thermosipho melanesiensis (strain DSM 12029 / CIP 104789 / BI429), this protein is Probable transcriptional regulatory protein Tmel_0985.